An 868-amino-acid polypeptide reads, in one-letter code: Receptor-like protein kinase At5g59670 (868 aa).

Residues 1–22 form the signal peptide; it reads MESSFGLLLALLTLTIIHIVQA. Topologically, residues 23–500 are extracellular; sequence QDPQGFISLD…PRLIKPPKKE (478 aa). Residues N38, N94, N141, N287, N300, N372, N405, N416, N423, N445, N464, and N471 are each glycosylated (N-linked (GlcNAc...) asparagine). 3 LRR repeats span residues 409-432, 433-459, and 461-481; these read PPRI…AIQS, ITQL…KMKS, and SVIN…LRKK. A helical transmembrane segment spans residues 501–521; it reads FPVAIVTLVVFVTVIVVLFLV. The Cytoplasmic segment spans residues 522-868; the sequence is FRKKMSTIVK…LDTTAVPMAR (347 aa). At T555 the chain carries Phosphothreonine. Residues 564-834 enclose the Protein kinase domain; the sequence is KNFQRVLGKG…SMSQVIHELK (271 aa). ATP contacts are provided by residues 570–578 and K592; that span reads LGKGGFGMV. Y637 carries the post-translational modification Phosphotyrosine. The active-site Proton acceptor is the D689. A Phosphoserine modification is found at S723. Phosphothreonine occurs at positions 724 and 729.

The protein belongs to the protein kinase superfamily. Ser/Thr protein kinase family. Post-translationally, autophosphorylated on Tyr and Thr residues.

Its subcellular location is the cell membrane. It catalyses the reaction L-seryl-[protein] + ATP = O-phospho-L-seryl-[protein] + ADP + H(+). The catalysed reaction is L-threonyl-[protein] + ATP = O-phospho-L-threonyl-[protein] + ADP + H(+). It carries out the reaction L-tyrosyl-[protein] + ATP = O-phospho-L-tyrosyl-[protein] + ADP + H(+). In terms of biological role, probable receptor with a dual specificity kinase activity acting on both serine/threonine- and tyrosine-containing substrates. This is Receptor-like protein kinase At5g59670 from Arabidopsis thaliana (Mouse-ear cress).